A 305-amino-acid chain; its full sequence is Oxygen-dependent coproporphyrinogen-III oxidase (305 aa).

Residue Ser-93 participates in substrate binding. Residues His-97 and His-107 each contribute to the a divalent metal cation site. Residue His-107 is the Proton donor of the active site. 109–111 (NVR) contacts substrate. Positions 146 and 176 each coordinate a divalent metal cation. The important for dimerization stretch occupies residues 241-276 (YVEFNLVYDRGTLFGLQSGGRTESILMSLPPQVRWG). 259-261 (GGR) contacts substrate.

Belongs to the aerobic coproporphyrinogen-III oxidase family. In terms of assembly, homodimer. A divalent metal cation serves as cofactor.

The protein localises to the cytoplasm. The catalysed reaction is coproporphyrinogen III + O2 + 2 H(+) = protoporphyrinogen IX + 2 CO2 + 2 H2O. It participates in porphyrin-containing compound metabolism; protoporphyrin-IX biosynthesis; protoporphyrinogen-IX from coproporphyrinogen-III (O2 route): step 1/1. In terms of biological role, involved in the heme biosynthesis. Catalyzes the aerobic oxidative decarboxylation of propionate groups of rings A and B of coproporphyrinogen-III to yield the vinyl groups in protoporphyrinogen-IX. This is Oxygen-dependent coproporphyrinogen-III oxidase from Pseudomonas fluorescens (strain ATCC BAA-477 / NRRL B-23932 / Pf-5).